Consider the following 1108-residue polypeptide: Ubiquitin carboxyl-terminal hydrolase 5 (1108 aa).

The region spanning 55 to 187 is the MATH domain; sequence FQRFTWHIKS…DGALLLTAYV (133 aa). Residues Cys-120 and Cys-222 each act as nucleophile in the active site. The USP domain maps to 213-528; sequence VGLKNQGATC…SAYMLLYLRK (316 aa). His-464 functions as the Proton acceptor in the catalytic mechanism.

The protein belongs to the peptidase C19 family.

It is found in the nucleus. The enzyme catalyses Thiol-dependent hydrolysis of ester, thioester, amide, peptide and isopeptide bonds formed by the C-terminal Gly of ubiquitin (a 76-residue protein attached to proteins as an intracellular targeting signal).. Functionally, hydrolase that deubiquitinates target proteins. Cleaves the UBL propeptide in sde2. The polypeptide is Ubiquitin carboxyl-terminal hydrolase 5 (ubp5) (Schizosaccharomyces pombe (strain 972 / ATCC 24843) (Fission yeast)).